We begin with the raw amino-acid sequence, 304 residues long: N-acetylmuramic acid 6-phosphate etherase (304 aa).

Residues 58–221 enclose the SIS domain; sequence IVDRMKQGGR…TTASMVKMGK (164 aa). Residue glutamate 86 is the Proton donor of the active site. The active site involves glutamate 117.

The protein belongs to the GCKR-like family. MurNAc-6-P etherase subfamily. As to quaternary structure, homodimer.

It carries out the reaction N-acetyl-D-muramate 6-phosphate + H2O = N-acetyl-D-glucosamine 6-phosphate + (R)-lactate. Its pathway is amino-sugar metabolism; N-acetylmuramate degradation. In terms of biological role, specifically catalyzes the cleavage of the D-lactyl ether substituent of MurNAc 6-phosphate, producing GlcNAc 6-phosphate and D-lactate. The chain is N-acetylmuramic acid 6-phosphate etherase from Clostridioides difficile (strain 630) (Peptoclostridium difficile).